We begin with the raw amino-acid sequence, 330 residues long: Taste receptor type 2 member 136 (330 aa).

The Extracellular portion of the chain corresponds to 1–32 (MKSQPVTQELHFIFPLFKTISSDIMSFLVSIA). The helical transmembrane segment at 33 to 53 (GIAMLAQIVLGTFANVFIVLV) threads the bilayer. Topologically, residues 54–73 (TCTDCIRRRKLFLADGILTS) are cytoplasmic. Residues 74–94 (LAFCRIGMLWVILISWCSIVF) form a helical membrane-spanning segment. Residues 95–122 (HQALSLQVRFSICVGWAVTNHFNMWLAT) lie on the Extracellular side of the membrane. Residues 123–143 (ILSILYLLKIGNFSNLIFLGL) traverse the membrane as a helical segment. Residues 144–149 (KRKIKS) lie on the Cytoplasmic side of the membrane. A helical transmembrane segment spans residues 150–170 (VFIVVLLASLVLLFPNLITVT). Topologically, residues 171–201 (VCETVQANGYRGNLTGKTKRTYFMNLTAMIS) are extracellular. N-linked (GlcNAc...) asparagine glycosylation is found at N183 and N195. A helical transmembrane segment spans residues 202–222 (FTLDNIISFTISMVCFLLLIY). Over 223 to 248 (SLCKHLRTMRLYGKGPHNPSASAHIK) the chain is Cytoplasmic. Residues 249–269 (ALQAVISFLLLFSMFILSLII) traverse the membrane as a helical segment. The Extracellular segment spans residues 270 to 283 (SGYNYMKPLNEPVH). Residues 284–304 (LICQLIGTLYPSSHSYVLLWG) traverse the membrane as a helical segment. Over 305 to 330 (NRRIKLAFVLAMVQVRARLWLKEEKP) the chain is Cytoplasmic.

The protein belongs to the G-protein coupled receptor T2R family.

It localises to the membrane. Its function is as follows. Putative taste receptor which may play a role in the perception of bitterness. This chain is Taste receptor type 2 member 136, found in Rattus norvegicus (Rat).